The chain runs to 259 residues: Snake venom serine protease homolog rhinocerase 3 (259 aa).

The N-terminal stretch at 1–17 (VLIRVLANLLLLQLSYA) is a signal peptide. Residues 18-23 (QESSEL) constitute a propeptide that is removed on maturation. The Peptidase S1 domain maps to 24 to 250 (VIGGDECDIN…YTDWIEGIIA (227 aa)). Intrachain disulfides connect C30-C164, C51-C67, C99-C257, C143-C211, C175-C190, and C201-C226. An N-linked (GlcNAc...) asparagine glycan is attached at N80. N252 is a glycosylation site (N-linked (GlcNAc...) asparagine).

It belongs to the peptidase S1 family. Snake venom subfamily. Expressed by the venom gland.

The protein resides in the secreted. Snake venom serine protease homolog that may act in the hemostasis system of the prey. This chain is Snake venom serine protease homolog rhinocerase 3, found in Bitis rhinoceros (West African gaboon viper).